The sequence spans 245 residues: 1-(5-phosphoribosyl)-5-[(5-phosphoribosylamino)methylideneamino] imidazole-4-carboxamide isomerase (245 aa).

Asp-7 serves as the catalytic Proton acceptor. The Proton donor role is filled by Asp-129.

Belongs to the HisA/HisF family.

It localises to the cytoplasm. It carries out the reaction 1-(5-phospho-beta-D-ribosyl)-5-[(5-phospho-beta-D-ribosylamino)methylideneamino]imidazole-4-carboxamide = 5-[(5-phospho-1-deoxy-D-ribulos-1-ylimino)methylamino]-1-(5-phospho-beta-D-ribosyl)imidazole-4-carboxamide. The protein operates within amino-acid biosynthesis; L-histidine biosynthesis; L-histidine from 5-phospho-alpha-D-ribose 1-diphosphate: step 4/9. The chain is 1-(5-phosphoribosyl)-5-[(5-phosphoribosylamino)methylideneamino] imidazole-4-carboxamide isomerase from Vibrio vulnificus (strain CMCP6).